A 335-amino-acid chain; its full sequence is DNA-directed RNA polymerase subunit alpha (335 aa).

The interval 1–233 is alpha N-terminal domain (alpha-NTD); sequence MVREKIRVST…DLLIPFLHAE (233 aa). The tract at residues 263 to 335 is alpha C-terminal domain (alpha-CTD); that stretch reads KKKIALKFIF…HFVIDLKNKR (73 aa).

This sequence belongs to the RNA polymerase alpha chain family. In plastids the minimal PEP RNA polymerase catalytic core is composed of four subunits: alpha, beta, beta', and beta''. When a (nuclear-encoded) sigma factor is associated with the core the holoenzyme is formed, which can initiate transcription.

The protein resides in the plastid. It is found in the chloroplast. It carries out the reaction RNA(n) + a ribonucleoside 5'-triphosphate = RNA(n+1) + diphosphate. Its function is as follows. DNA-dependent RNA polymerase catalyzes the transcription of DNA into RNA using the four ribonucleoside triphosphates as substrates. The chain is DNA-directed RNA polymerase subunit alpha from Spinacia oleracea (Spinach).